A 183-amino-acid chain; its full sequence is MSEQTFHGTTILCAKRNGEMVIGGDGQVTLGHVVMKGNARKVRRLFNGKILAGFAGATADAFTLFERFEGKLQTHNGQLMRAAVEMAKDWRTDRALRKLEAMMLVADADNMLLISGTGDVIEPAHDFISIGSGGSYAHSAAQALMENTDLSAKDVVEKALNIAADLCIYTNHNLTIESLNKED.

The active site involves threonine 9. 3 residues coordinate Na(+): alanine 164, cysteine 167, and threonine 170.

This sequence belongs to the peptidase T1B family. HslV subfamily. A double ring-shaped homohexamer of HslV is capped on each side by a ring-shaped HslU homohexamer. The assembly of the HslU/HslV complex is dependent on binding of ATP.

The protein resides in the cytoplasm. It catalyses the reaction ATP-dependent cleavage of peptide bonds with broad specificity.. With respect to regulation, allosterically activated by HslU binding. Functionally, protease subunit of a proteasome-like degradation complex believed to be a general protein degrading machinery. This Hydrogenovibrio crunogenus (strain DSM 25203 / XCL-2) (Thiomicrospira crunogena) protein is ATP-dependent protease subunit HslV.